A 360-amino-acid chain; its full sequence is Decorin (360 aa).

The N-terminal stretch at 1–16 (MKATIIFLLLAQVSWA) is a signal peptide. Residues 17–30 (GPFQQRGLFDFMLE) constitute a propeptide that is removed on maturation. Serine 34 carries O-linked (Xyl...) (glycosaminoglycan) serine glycosylation. Intrachain disulfides connect cysteine 55-cysteine 61 and cysteine 59-cysteine 68. LRR repeat units follow at residues 74-94 (DKVP…NNKI), 95-118 (TEIK…NNKI), 119-142 (SKIS…KNHL), 143-163 (KELP…ENEI), 164-187 (TKVR…TNPL), 188-213 (KSSG…DTNI), 214-234 (TTIP…GNKI), 235-258 (TKVD…FNSI), 259-282 (SAVD…NNKL), 283-305 (IRVP…NNNI), 306-335 (SAVG…SNPV), and 336-360 (QYWE…GNYK). N-linked (GlcNAc...) asparagine glycosylation is present at asparagine 212. Residues asparagine 263 and asparagine 304 are each glycosylated (N-linked (GlcNAc...) asparagine). Cysteine 314 and cysteine 347 form a disulfide bridge.

Belongs to the small leucine-rich proteoglycan (SLRP) family. SLRP class I subfamily. In terms of assembly, binds to type I and type II collagen, fibronectin and TGF-beta. Forms a ternary complex with MFAP2 and ELN. Interacts with DPT. The attached glycosaminoglycan chain can be either chondroitin sulfate or dermatan sulfate depending upon the tissue of origin.

The protein resides in the secreted. It localises to the extracellular space. It is found in the extracellular matrix. Its function is as follows. May affect the rate of fibrils formation. The chain is Decorin (DCN) from Canis lupus familiaris (Dog).